We begin with the raw amino-acid sequence, 244 residues long: B3 domain-containing protein At2g36080 (244 aa).

The segment at residues Phe38–Gly144 is a DNA-binding region (TF-B3).

It is found in the nucleus. The sequence is that of B3 domain-containing protein At2g36080 (ARF31) from Arabidopsis thaliana (Mouse-ear cress).